Reading from the N-terminus, the 749-residue chain is Pectate disaccharide-lyase (749 aa).

The N-terminal stretch at 1–26 (MKYAASGLLSVALNSLLLLGSNQRFA) is a signal peptide. Positions 538, 562, 563, and 566 each coordinate Ca(2+). Catalysis depends on lysine 595, which acts as the Proton acceptor.

Belongs to the polysaccharide lyase 9 family. Ca(2+) is required as a cofactor.

The protein resides in the secreted. The catalysed reaction is [(1-&gt;4)-alpha-D-galacturonosyl](n) = 4-(4-deoxy-alpha-D-galact-4-enuronosyl)-D-galacturonate + [(1-&gt;4)-alpha-D-galacturonosyl](n-2). Activity on pectate is nearly completely inhibited by ethyleneglycol-bis-(P-aminoethyl ether) N,N'-tetraacetic acid (EGTA), EDTA or nitrilotriacetic acid. Activity is specifically restored by the addition of Ca(2+). In terms of biological role, exo-cleaving lyase that catalyzes the digestion of pectate. Contributes to pectate catabolism but not to bacterial virulence. In vitro can also use citrus pectin and highly methyl-esterified Link pectin as substrates. This chain is Pectate disaccharide-lyase, found in Dickeya chrysanthemi (Pectobacterium chrysanthemi).